A 111-amino-acid polypeptide reads, in one-letter code: MEAKAILRTARISPQKARLVADQVRGLSAERAVNLLKFSDKKAAHLIKKVVESAIANAENNQGADVDELKVKTIMVDEGPSLKRFMARAKGRGTRILKRTSHITVIVGAAK.

The protein belongs to the universal ribosomal protein uL22 family. As to quaternary structure, part of the 50S ribosomal subunit.

Functionally, this protein binds specifically to 23S rRNA; its binding is stimulated by other ribosomal proteins, e.g. L4, L17, and L20. It is important during the early stages of 50S assembly. It makes multiple contacts with different domains of the 23S rRNA in the assembled 50S subunit and ribosome. In terms of biological role, the globular domain of the protein is located near the polypeptide exit tunnel on the outside of the subunit, while an extended beta-hairpin is found that lines the wall of the exit tunnel in the center of the 70S ribosome. In Xanthomonas oryzae pv. oryzae (strain PXO99A), this protein is Large ribosomal subunit protein uL22.